Consider the following 258-residue polypeptide: Protein IMPACT homolog (258 aa).

The RWD domain occupies 10–114; it reads EELEAVEAIY…TELDGVLYVE (105 aa). Lys-187 participates in a covalent cross-link: Glycyl lysine isopeptide (Lys-Gly) (interchain with G-Cter in ubiquitin).

It belongs to the IMPACT family. In terms of assembly, interacts (via N-terminus) with GCN1 (via C-terminus); this interaction reduces the GCN1-GCN20 complex formation and prevents the interaction of GCN1 with GCN2 protein kinase and GCN2 activation in amino acid-starved cells. Interacts (via C-terminus) with ACT1; this interaction occurs in a GCN1-independent manner. Interacts with RPL39; this interaction occurs in a GCN1-independent manner. Associates (via middle region) with ribosomes; this association occurs in a GCN1-independent manner and persists under amino acid starvation conditions.

The protein resides in the cytoplasm. It is found in the nucleus. In terms of biological role, translational regulator that ensures constant high levels of translation under amino acid starvation. Plays a role as a negative regulator of the GCN2 kinase activity; impairs GCN1-mediated GCN2 activation, and hence GCN2-mediated eIF-2-alpha phosphorylation in amino acid-starved cells and subsequent down-regulation of protein synthesis. In normal conditions, it resides in a actin complex and has no activity. The sequence is that of Protein IMPACT homolog (YIH1) from Saccharomyces cerevisiae (strain ATCC 204508 / S288c) (Baker's yeast).